Reading from the N-terminus, the 257-residue chain is Imidazole glycerol phosphate synthase subunit HisF (257 aa).

Residues aspartate 11 and aspartate 130 contribute to the active site.

It belongs to the HisA/HisF family. Heterodimer of HisH and HisF.

The protein resides in the cytoplasm. It carries out the reaction 5-[(5-phospho-1-deoxy-D-ribulos-1-ylimino)methylamino]-1-(5-phospho-beta-D-ribosyl)imidazole-4-carboxamide + L-glutamine = D-erythro-1-(imidazol-4-yl)glycerol 3-phosphate + 5-amino-1-(5-phospho-beta-D-ribosyl)imidazole-4-carboxamide + L-glutamate + H(+). The protein operates within amino-acid biosynthesis; L-histidine biosynthesis; L-histidine from 5-phospho-alpha-D-ribose 1-diphosphate: step 5/9. In terms of biological role, IGPS catalyzes the conversion of PRFAR and glutamine to IGP, AICAR and glutamate. The HisF subunit catalyzes the cyclization activity that produces IGP and AICAR from PRFAR using the ammonia provided by the HisH subunit. This chain is Imidazole glycerol phosphate synthase subunit HisF, found in Aliivibrio fischeri (strain MJ11) (Vibrio fischeri).